The primary structure comprises 69 residues: Small archaeal modifier protein 2 (69 aa).

Residue Lys-55 forms a Glycyl lysine isopeptide (Lys-Gly) (interchain with G-Cter in SAMP2) linkage. Gly-69 is modified (1-thioglycine; alternate). Gly-69 bears the Glycyl adenylate; alternate mark. Gly-69 participates in a covalent cross-link: Glycyl lysine isopeptide (Gly-Lys) (interchain with K-? in acceptor proteins); alternate.

Post-translationally, the C-terminal glycine is likely acyl-adenylated (-COAMP) by UbaA, and also probably thiocarboxylated (-COSH) to function in sulfur transfer.

Its function is as follows. Functions as a protein modifier covalently attached to lysine residues of substrate proteins, as well as a sulfur carrier in tRNA thiolation. The protein modification process is termed sampylation and involves the formation of an isopeptide bond between the SAMP2 C-terminal glycine carboxylate and the epsilon-amino group of lysine residues on target proteins. Is able to form polymeric chains with itself likely at Lys-55, similar to ubiquitin and other ubiquitin-like proteins. May serve as a proteolytic signal in the cell to target proteins for degradation by proteasomes. The sequence is that of Small archaeal modifier protein 2 from Pyrococcus furiosus (strain ATCC 43587 / DSM 3638 / JCM 8422 / Vc1).